A 332-amino-acid chain; its full sequence is Anthranilate phosphoribosyltransferase (332 aa).

5-phospho-alpha-D-ribose 1-diphosphate-binding positions include G79, 82-83 (GD), T87, 89-92 (NIST), 107-115 (KHGNRGVSS), and S119. An anthranilate-binding site is contributed by G79. Mg(2+) is bound at residue S91. N110 is an anthranilate binding site. R165 provides a ligand contact to anthranilate. Residues D223 and E224 each contribute to the Mg(2+) site.

It belongs to the anthranilate phosphoribosyltransferase family. As to quaternary structure, homodimer. The cofactor is Mg(2+).

It carries out the reaction N-(5-phospho-beta-D-ribosyl)anthranilate + diphosphate = 5-phospho-alpha-D-ribose 1-diphosphate + anthranilate. The protein operates within amino-acid biosynthesis; L-tryptophan biosynthesis; L-tryptophan from chorismate: step 2/5. Functionally, catalyzes the transfer of the phosphoribosyl group of 5-phosphorylribose-1-pyrophosphate (PRPP) to anthranilate to yield N-(5'-phosphoribosyl)-anthranilate (PRA). The polypeptide is Anthranilate phosphoribosyltransferase (Vibrio cholerae serotype O1 (strain ATCC 39541 / Classical Ogawa 395 / O395)).